A 213-amino-acid polypeptide reads, in one-letter code: CASP-like protein UU2 (213 aa).

The interval 1–26 (MEDPKGAWQSDVFDNGRDFKPHDKAP) is disordered. Residues 1 to 53 (MEDPKGAWQSDVFDNGRDFKPHDKAPANVTAGTTPPMYNVGAGGSEGNSKALS) are Cytoplasmic-facing. The segment covering 14 to 25 (DNGRDFKPHDKA) has biased composition (basic and acidic residues). The helical transmembrane segment at 54-74 (IISIVLRCLSIMFNVVSLGVI) threads the bilayer. Over 75-96 (ASNQGKSYFVVWRTLNSSNMQY) the chain is Extracellular. N90 is a glycosylation site (N-linked (GlcNAc...) asparagine). Residues 97-117 (LFAINVIVLVYCVVQLILSII) form a helical membrane-spanning segment. Residues 118–137 (NLVQGKMVLSGPTQPASTIT) are Cytoplasmic-facing. A helical membrane pass occupies residues 138 to 158 (YICDQGLTYMLMAGFGAGVAL). Residues 159 to 184 (QASVDKGESGMLDCSGANEFCGKNKA) are Extracellular-facing. A helical membrane pass occupies residues 185-205 (SAALSFLGFVCIALSANLNYL). Residues 206–213 (RLYFMAAK) lie on the Cytoplasmic side of the membrane.

The protein belongs to the Casparian strip membrane proteins (CASP) family. In terms of assembly, homodimer and heterodimers.

The protein localises to the cell membrane. The sequence is that of CASP-like protein UU2 from Physcomitrium patens (Spreading-leaved earth moss).